Consider the following 407-residue polypeptide: ATP phosphoribosyltransferase regulatory subunit (407 aa).

It belongs to the class-II aminoacyl-tRNA synthetase family. HisZ subfamily. In terms of assembly, heteromultimer composed of HisG and HisZ subunits.

It localises to the cytoplasm. The protein operates within amino-acid biosynthesis; L-histidine biosynthesis; L-histidine from 5-phospho-alpha-D-ribose 1-diphosphate: step 1/9. Its function is as follows. Required for the first step of histidine biosynthesis. May allow the feedback regulation of ATP phosphoribosyltransferase activity by histidine. The chain is ATP phosphoribosyltransferase regulatory subunit from Rippkaea orientalis (strain PCC 8801 / RF-1) (Cyanothece sp. (strain PCC 8801)).